The chain runs to 467 residues: UDP-N-acetylmuramate--L-alanine ligase (467 aa).

114 to 120 serves as a coordination point for ATP; sequence GTHGKTT.

Belongs to the MurCDEF family.

The protein resides in the cytoplasm. It carries out the reaction UDP-N-acetyl-alpha-D-muramate + L-alanine + ATP = UDP-N-acetyl-alpha-D-muramoyl-L-alanine + ADP + phosphate + H(+). It participates in cell wall biogenesis; peptidoglycan biosynthesis. Cell wall formation. The chain is UDP-N-acetylmuramate--L-alanine ligase from Nitrobacter hamburgensis (strain DSM 10229 / NCIMB 13809 / X14).